The sequence spans 313 residues: Thiamine thiazole synthase (313 aa).

Residues Ala71, 92–93 (EA), Gly100, and Val165 each bind substrate. Cys199 is modified (2,3-didehydroalanine (Cys)). Substrate contacts are provided by residues Asp201, His216, Met268, and 278–280 (RMG).

This sequence belongs to the THI4 family. As to quaternary structure, homooctamer. The cofactor is Fe cation. During the catalytic reaction, a sulfide is transferred from Cys-199 to a reaction intermediate, generating a dehydroalanine residue.

Its subcellular location is the cytoplasm. The protein localises to the nucleus. The catalysed reaction is [ADP-thiazole synthase]-L-cysteine + glycine + NAD(+) = [ADP-thiazole synthase]-dehydroalanine + ADP-5-ethyl-4-methylthiazole-2-carboxylate + nicotinamide + 3 H2O + 2 H(+). In terms of biological role, involved in biosynthesis of the thiamine precursor thiazole. Catalyzes the conversion of NAD and glycine to adenosine diphosphate 5-(2-hydroxyethyl)-4-methylthiazole-2-carboxylic acid (ADT), an adenylated thiazole intermediate. The reaction includes an iron-dependent sulfide transfer from a conserved cysteine residue of the protein to a thiazole intermediate. The enzyme can only undergo a single turnover, which suggests it is a suicide enzyme. May have additional roles in adaptation to various stress conditions and in DNA damage tolerance. The protein is Thiamine thiazole synthase of Coprinopsis cinerea (strain Okayama-7 / 130 / ATCC MYA-4618 / FGSC 9003) (Inky cap fungus).